Consider the following 801-residue polypeptide: LPS-assembly protein LptD (801 aa).

An N-terminal signal peptide occupies residues 1–23 (MARLFSLKPLVLALGFCFGTHCA).

It belongs to the LptD family. In terms of assembly, component of the lipopolysaccharide transport and assembly complex. Interacts with LptE and LptA.

Its subcellular location is the cell outer membrane. Functionally, together with LptE, is involved in the assembly of lipopolysaccharide (LPS) at the surface of the outer membrane. The chain is LPS-assembly protein LptD from Neisseria gonorrhoeae (strain ATCC 700825 / FA 1090).